We begin with the raw amino-acid sequence, 154 residues long: NADPH-dependent 7-cyano-7-deazaguanine reductase (154 aa).

The active-site Thioimide intermediate is cysteine 52. Aspartate 59 serves as the catalytic Proton donor. Substrate-binding positions include valine 74–serine 76 and histidine 93–glutamate 94.

It belongs to the GTP cyclohydrolase I family. QueF type 1 subfamily.

The protein resides in the cytoplasm. The enzyme catalyses 7-aminomethyl-7-carbaguanine + 2 NADP(+) = 7-cyano-7-deazaguanine + 2 NADPH + 3 H(+). The protein operates within tRNA modification; tRNA-queuosine biosynthesis. Its function is as follows. Catalyzes the NADPH-dependent reduction of 7-cyano-7-deazaguanine (preQ0) to 7-aminomethyl-7-deazaguanine (preQ1). The polypeptide is NADPH-dependent 7-cyano-7-deazaguanine reductase (Rhizobium rhizogenes (strain K84 / ATCC BAA-868) (Agrobacterium radiobacter)).